Here is a 561-residue protein sequence, read N- to C-terminus: MKTEQTPWWKKAVVYQIYPKSFNDTTGNGVGDLNGIIEKLDYLKTLQVDVLWLTPIYDSPQHDNGYDIRDYYSIYPEYGTMEDFERLVSEAHKRDLKVVMDLVVNHTSTEHKWFREAISSIDSPYRDFYIWKKPQENGSVPTNWESKFGGSAWELDEASGQYYLHLFDVTQADLNWENEEVRKHVYDMMHFWFEKGIDGFRLDVINLISKDQRFPNAEEGDGRSFYTDGPRVHEFLHEMNEKVFSHYDSMTVGEMSSTTVDHCIRYTNPDNKELDMTFSFHHLKVDYPNGEKWALAPFDFLKLKEILSDWQTGMHAGGGWNALFWCNHDQPRVVSRYGDDGAYRVKSAKMLATAIHMMQGTPYIYQGEELGMTNPKFTDISSYRDVESLNMYHAFKEKGMADQDITAILQAKSRDNSRTPVQWDATENGGFTTGTPWIPVAGNYREINAEAALRDQNSVFYHYQKLIQIRKMYDIVTEGTYEIIAKDDPNIFAYLRHGSNEKLLVINNFYGTEAAFTLPDSLAPDEWKAEVLLTNDEAREGLQNMTLRPYESIVYRLTKPC.

Aspartate 203 acts as the Nucleophile in catalysis. Glutamate 254 (proton donor) is an active-site residue.

It belongs to the glycosyl hydrolase 13 family.

The protein resides in the cytoplasm. It carries out the reaction alpha,alpha-trehalose 6-phosphate + H2O = D-glucose 6-phosphate + D-glucose. Its activity is regulated as follows. Activity is stimulated by high salt concentrations with different efficiencies depending on the kind of salt. In vitro, inhibited by glucose. Hydrolyzes trehalose-6-phosphate to glucose and glucose 6-phosphate. Can also very effectively hydrolyze p-nitrophenyl-alpha-D-glucopyranoside, but not lactose, maltose, sucrose or sucrose-6-phosphate. Trehalose is also hydrolyzed, but to a much smaller extent than trehalose-6-phosphate. In Bacillus subtilis (strain 168), this protein is Trehalose-6-phosphate hydrolase.